A 106-amino-acid polypeptide reads, in one-letter code: Toxin-like structure LSTX-D4 (106 aa).

The first 20 residues, 1-20 (MMKVLVVVALLVTLISYSSS), serve as a signal peptide directing secretion. A propeptide spanning residues 21–41 (EGIGDLEADELLSLMANEQTR) is cleaved from the precursor. Intrachain disulfides connect Cys45-Cys60, Cys52-Cys69, Cys59-Cys85, and Cys71-Cys83.

This sequence belongs to the neurotoxin 19 (CSTX) family. 02 (D7) subfamily. In terms of tissue distribution, expressed by the venom gland.

The protein resides in the secreted. This chain is Toxin-like structure LSTX-D4, found in Lycosa singoriensis (Wolf spider).